The sequence spans 381 residues: Putative acyl-CoA dehydrogenase YdbM (381 aa).

Residues 158 to 160 (FTT) and 337 to 341 (RIVGA) each bind FAD.

This sequence belongs to the acyl-CoA dehydrogenase family. The cofactor is FAD.

This Bacillus subtilis (strain 168) protein is Putative acyl-CoA dehydrogenase YdbM (ydbM).